Here is a 383-residue protein sequence, read N- to C-terminus: UDP-N-acetylglucosamine--N-acetylmuramyl-(pentapeptide) pyrophosphoryl-undecaprenol N-acetylglucosamine transferase (383 aa).

Residues 10 to 12 (TGG), Asn-124, Arg-165, Ser-190, Ile-245, and Gln-290 each bind UDP-N-acetyl-alpha-D-glucosamine. Positions 364-383 (PFGQAREPGQKPARPPDLAS) are disordered.

Belongs to the glycosyltransferase 28 family. MurG subfamily.

Its subcellular location is the cell inner membrane. The enzyme catalyses di-trans,octa-cis-undecaprenyl diphospho-N-acetyl-alpha-D-muramoyl-L-alanyl-D-glutamyl-meso-2,6-diaminopimeloyl-D-alanyl-D-alanine + UDP-N-acetyl-alpha-D-glucosamine = di-trans,octa-cis-undecaprenyl diphospho-[N-acetyl-alpha-D-glucosaminyl-(1-&gt;4)]-N-acetyl-alpha-D-muramoyl-L-alanyl-D-glutamyl-meso-2,6-diaminopimeloyl-D-alanyl-D-alanine + UDP + H(+). The protein operates within cell wall biogenesis; peptidoglycan biosynthesis. Functionally, cell wall formation. Catalyzes the transfer of a GlcNAc subunit on undecaprenyl-pyrophosphoryl-MurNAc-pentapeptide (lipid intermediate I) to form undecaprenyl-pyrophosphoryl-MurNAc-(pentapeptide)GlcNAc (lipid intermediate II). The sequence is that of UDP-N-acetylglucosamine--N-acetylmuramyl-(pentapeptide) pyrophosphoryl-undecaprenol N-acetylglucosamine transferase from Anaeromyxobacter sp. (strain K).